The chain runs to 112 residues: MVSVKKVKKSQENIGSKLALVMKSGKSQLGYKSTLKTLRAGKSKLILLASNLPSIRRSEIEYYAMLSKTTVHLYSGNNVDLGTALGRHYRVSVMSITDAGDSDILTALNAKA.

The protein belongs to the eukaryotic ribosomal protein eL30 family.

The protein is Large ribosomal subunit protein eL30 (rpl30) of Dictyostelium discoideum (Social amoeba).